We begin with the raw amino-acid sequence, 28 residues long: Ribosome-inactivating protein pleuturegin (28 aa).

The protein belongs to the ribosome-inactivating protein family.

The catalysed reaction is Endohydrolysis of the N-glycosidic bond at one specific adenosine on the 28S rRNA.. Its function is as follows. Inhibits protein synthesis in animal cells. Does not possess ribonuclease activity. The sequence is that of Ribosome-inactivating protein pleuturegin from Pleurotus tuber-regium (King tuber oyster mushroom).